The primary structure comprises 440 residues: Thymidine phosphorylase (440 aa).

It belongs to the thymidine/pyrimidine-nucleoside phosphorylase family. Homodimer.

The enzyme catalyses thymidine + phosphate = 2-deoxy-alpha-D-ribose 1-phosphate + thymine. It functions in the pathway pyrimidine metabolism; dTMP biosynthesis via salvage pathway; dTMP from thymine: step 1/2. In terms of biological role, the enzymes which catalyze the reversible phosphorolysis of pyrimidine nucleosides are involved in the degradation of these compounds and in their utilization as carbon and energy sources, or in the rescue of pyrimidine bases for nucleotide synthesis. The chain is Thymidine phosphorylase from Salmonella heidelberg (strain SL476).